The chain runs to 229 residues: Leucyl/phenylalanyl-tRNA--protein transferase (229 aa).

Belongs to the L/F-transferase family.

The protein resides in the cytoplasm. It catalyses the reaction N-terminal L-lysyl-[protein] + L-leucyl-tRNA(Leu) = N-terminal L-leucyl-L-lysyl-[protein] + tRNA(Leu) + H(+). The enzyme catalyses N-terminal L-arginyl-[protein] + L-leucyl-tRNA(Leu) = N-terminal L-leucyl-L-arginyl-[protein] + tRNA(Leu) + H(+). It carries out the reaction L-phenylalanyl-tRNA(Phe) + an N-terminal L-alpha-aminoacyl-[protein] = an N-terminal L-phenylalanyl-L-alpha-aminoacyl-[protein] + tRNA(Phe). Functionally, functions in the N-end rule pathway of protein degradation where it conjugates Leu, Phe and, less efficiently, Met from aminoacyl-tRNAs to the N-termini of proteins containing an N-terminal arginine or lysine. This chain is Leucyl/phenylalanyl-tRNA--protein transferase, found in Pseudomonas syringae pv. syringae (strain B728a).